A 180-amino-acid polypeptide reads, in one-letter code: Beta-lactoglobulin-1/B (180 aa).

An N-terminal signal peptide occupies residues 1–18 (MKCLLLALGLALACGVQA). Cystine bridges form between Cys84-Cys178, Cys124-Cys137, and Cys124-Cys139.

It belongs to the calycin superfamily. Lipocalin family. As to quaternary structure, under physiological conditions beta-lactoglobulin exists as an equilibrium mixture of monomeric and dimeric forms. In terms of processing, alternate disulfide bonds occur in equal amounts.

It localises to the secreted. In terms of biological role, lactoglobulin is the primary component of whey, it binds retinol and is probably involved in the transport of that molecule. This chain is Beta-lactoglobulin-1/B, found in Ovis aries (Sheep).